The primary structure comprises 89 residues: Protein S100-A6 (89 aa).

EF-hand domains lie at 12-47 (LVAI…IGAK) and 48-83 (LQDA…LALI). Ca(2+) contacts are provided by Thr28 and Glu33. Lys40 carries the post-translational modification N6-acetyllysine. The residue at position 47 (Lys47) is an N6-acetyllysine; alternate. At Lys47 the chain carries N6-succinyllysine; alternate. Residues Asp61, Asn63, Asp65, Glu67, and Glu72 each coordinate Ca(2+).

It belongs to the S-100 family. As to quaternary structure, homodimer; head to tail assembly of 2 subunits. Interacts with CACYBP in a calcium-dependent manner. Interacts with ANXA2 and ANXA11 (via N-terminus). Interacts with SUGT1. Interacts with TP53; has higher affinity for TP53 that is phosphorylated on its N-terminal domain, and lower affinity for TP53 that is phosphorylated on its C-terminal domain. Interacts with tropomyosin. Interacts with FKBP4. Interacts with PPP5C (via TPR repeats); the interaction is calcium-dependent and modulates PPP5C activity. Interacts with TPPP; this interaction inhibits TPPP dimerization.

It localises to the nucleus envelope. The protein resides in the cytoplasm. It is found in the cell membrane. Its function is as follows. May function as calcium sensor and modulator, contributing to cellular calcium signaling. May function by interacting with other proteins, such as TPR-containing proteins, and indirectly play a role in many physiological processes such as the reorganization of the actin cytoskeleton and in cell motility. Binds 2 calcium ions. Calcium binding is cooperative. The protein is Protein S100-A6 (S100a6) of Rattus norvegicus (Rat).